The primary structure comprises 65 residues: Large ribosomal subunit protein bL35 (65 aa).

It belongs to the bacterial ribosomal protein bL35 family.

This is Large ribosomal subunit protein bL35 from Wolbachia sp. subsp. Brugia malayi (strain TRS).